Consider the following 147-residue polypeptide: Large ribosomal subunit protein bL9 (147 aa).

Belongs to the bacterial ribosomal protein bL9 family.

Functionally, binds to the 23S rRNA. The polypeptide is Large ribosomal subunit protein bL9 (Clostridium botulinum (strain 657 / Type Ba4)).